A 322-amino-acid polypeptide reads, in one-letter code: MSSAEQHTCSRPVVLITGPTASGKSALAHALAKAINAEIVSADSRQIYRGMDIGTAKPSMEMLAEVPYHFINEKEIAEEYNAGDFTSDAMARIRSIHEKGHDAIVAGGSTLYIEGLLHGFSQLPKKDADIRRRLQEELNTGGAEKLYARLTTLDPEHARTLDPSKTQRLVRSLEIITITGKTVTGLRAAEHSRLSSVTFIPFGLSLQRNRLYERINTRTDAMMASGLLKEAEQLYERYLSAENRATINALETVGYKELFQYFDGIHSLLRAVELIQQHTRNYAKRQLTFFKNRLNVQWLAAPENLKELHEQKEQLITLYSKT.

18-25 serves as a coordination point for ATP; the sequence is GPTASGKS. Position 20–25 (20–25) interacts with substrate; sequence TASGKS. Interaction with substrate tRNA stretches follow at residues 43 to 46 and 167 to 171; these read DSRQ and QRLVR.

It belongs to the IPP transferase family. In terms of assembly, monomer. The cofactor is Mg(2+).

The catalysed reaction is adenosine(37) in tRNA + dimethylallyl diphosphate = N(6)-dimethylallyladenosine(37) in tRNA + diphosphate. Functionally, catalyzes the transfer of a dimethylallyl group onto the adenine at position 37 in tRNAs that read codons beginning with uridine, leading to the formation of N6-(dimethylallyl)adenosine (i(6)A). In Chlorobium phaeobacteroides (strain BS1), this protein is tRNA dimethylallyltransferase.